The sequence spans 541 residues: MAKTIAYDEEARRGLERGLNALADAVKVTLGPKGRNVVLEKKWGAPTITNDGVSIAKEIELEDPYEKIGAELVKEVAKKTDDVAGDGTTTATVLAQALVREGLRNVAAGANPLGLKRGIEKAVEKVTETLLKSAKEVETKDQIAATAAISAGDQSIGDLIAEAMDKVGNEGVITVEESNTFGLQLELTEGMRFDKGYISGYFVTDAERQEAVLEDPFILLVSSKVSTVKDLLPLLEKVIQAGKPLLIIAEDVEGEALSTLVVNKIRGTFKSVAVKAPGFGDRRKAMLQDMAILTGGQVISEEVGLSLESADISLLGKARKVVVTKDETTIVEGAGDSDAIAGRVAQIRTEIENSDSDYDREKLQERLAKLAGGVAVIKAGAATEVELKERKHRIEDAVRNAKAAVEEGIVAGGGVALLHAIPALDELKLEGEEATGANIVRVALEAPLKQIAFNGGLEPGVVAEKVRNSPAGTGLNAATGEYEDLLKAGIADPVKVTRSALQNAASIAGLFLTTEAVVADKPEKAAAPAGDPTGGMGGMDF.

ATP-binding positions include 29–32, 86–90, glycine 413, 476–478, and aspartate 492; these read TLGP, DGTTT, and NAA.

Belongs to the chaperonin (HSP60) family. In terms of assembly, forms a cylinder of 14 subunits composed of two heptameric rings stacked back-to-back. Interacts with the co-chaperonin GroES.

It localises to the secreted. The protein resides in the capsule. The protein localises to the cell surface. It is found in the cell wall. The catalysed reaction is ATP + H2O + a folded polypeptide = ADP + phosphate + an unfolded polypeptide.. Together with its co-chaperonin GroES, plays an essential role in assisting protein folding. The GroEL-GroES system forms a nano-cage that allows encapsulation of the non-native substrate proteins and provides a physical environment optimized to promote and accelerate protein folding. The sequence is that of Chaperonin GroEL 2 from Mycolicibacterium paratuberculosis (strain ATCC BAA-968 / K-10) (Mycobacterium paratuberculosis).